We begin with the raw amino-acid sequence, 191 residues long: MYNVIFVLGGPGAGKGTQCDRLAEKFDKFVHISAGDCLREEQNRPGSKYGNLIKEYIKDGKIVPMEITISLLETKMKECHDKGIDKFLIDGFPREMDQCEGFEKSVCPAKFALYFRCGQETMLKRLIHRGKTSGRSDDNIESIKKRFVTYTKASMPVVEYLKSQNRLITIDAEQDPDAVFEDTVKALQPYL.

Position 12-17 (12-17) interacts with ATP; sequence GAGKGT. The segment at 33–63 is NMP; it reads SAGDCLREEQNRPGSKYGNLIKEYIKDGKIV. A ribonucleoside 5'-phosphate contacts are provided by residues Arg-39, 61 to 63, 91 to 94, and Gln-98; these read KIV and GFPR. The LID stretch occupies residues 128–138; sequence HRGKTSGRSDD. Arg-129 is a binding site for ATP. Arg-135 and Arg-146 together coordinate a ribonucleoside 5'-phosphate. Residue Gln-174 coordinates ATP.

It belongs to the adenylate kinase family. UMP-CMP kinase subfamily. As to quaternary structure, monomer. It depends on Mg(2+) as a cofactor.

The protein localises to the cytoplasm. It is found in the nucleus. It catalyses the reaction UMP + ATP = UDP + ADP. In terms of biological role, catalyzes the phosphorylation of pyrimidine nucleoside monophosphates at the expense of ATP. Plays an important role in de novo pyrimidine nucleotide biosynthesis. Has preference for UMP and dUMP as phosphate acceptors, but can also use CMP, dCMP and AMP. The chain is Uridylate kinase from Schizosaccharomyces pombe (strain 972 / ATCC 24843) (Fission yeast).